Reading from the N-terminus, the 406-residue chain is Peptide transporter imqD (406 aa).

Residues methionine 1 to serine 25 form a disordered region. A compositionally biased stretch (low complexity) spans serine 14–serine 25. A run of 6 helical transmembrane segments spans residues glycine 184–alanine 204, isoleucine 220–isoleucine 240, alanine 262–isoleucine 282, valine 309–threonine 329, alanine 344–isoleucine 364, and leucine 373–isoleucine 393.

The protein belongs to the major facilitator superfamily. Proton-dependent oligopeptide transporter (POT/PTR) (TC 2.A.17) family.

Its subcellular location is the membrane. Functionally, peptide transporter; part of the gene cluster that mediates the biosynthesis of imizoquins A to D, tripeptide-derived alkaloids that serve a protective role against oxidative stress that are essential for normal germination. This Aspergillus flavus (strain ATCC 200026 / FGSC A1120 / IAM 13836 / NRRL 3357 / JCM 12722 / SRRC 167) protein is Peptide transporter imqD.